A 395-amino-acid chain; its full sequence is Acetate kinase (395 aa).

A Mg(2+)-binding site is contributed by Asn7. Lys14 is a binding site for ATP. Residue Arg92 coordinates substrate. The active-site Proton donor/acceptor is the Asp149. ATP-binding positions include 207-211 (HLGNG), 282-284 (DMR), and 329-333 (GIGEN). Glu382 is a Mg(2+) binding site.

The protein belongs to the acetokinase family. As to quaternary structure, homodimer. Mg(2+) serves as cofactor. The cofactor is Mn(2+).

The protein resides in the cytoplasm. It catalyses the reaction acetate + ATP = acetyl phosphate + ADP. Its pathway is metabolic intermediate biosynthesis; acetyl-CoA biosynthesis; acetyl-CoA from acetate: step 1/2. In terms of biological role, catalyzes the formation of acetyl phosphate from acetate and ATP. Can also catalyze the reverse reaction. In Brachyspira hyodysenteriae (strain ATCC 49526 / WA1), this protein is Acetate kinase.